Reading from the N-terminus, the 418-residue chain is NADH-quinone oxidoreductase subunit D (418 aa).

Belongs to the complex I 49 kDa subunit family. NDH-1 is composed of 14 different subunits. Subunits NuoB, C, D, E, F, and G constitute the peripheral sector of the complex.

It localises to the cell inner membrane. It catalyses the reaction a quinone + NADH + 5 H(+)(in) = a quinol + NAD(+) + 4 H(+)(out). Its function is as follows. NDH-1 shuttles electrons from NADH, via FMN and iron-sulfur (Fe-S) centers, to quinones in the respiratory chain. The immediate electron acceptor for the enzyme in this species is believed to be ubiquinone. Couples the redox reaction to proton translocation (for every two electrons transferred, four hydrogen ions are translocated across the cytoplasmic membrane), and thus conserves the redox energy in a proton gradient. In Neisseria meningitidis serogroup A / serotype 4A (strain DSM 15465 / Z2491), this protein is NADH-quinone oxidoreductase subunit D.